A 184-amino-acid chain; its full sequence is NADH-quinone oxidoreductase subunit B (184 aa).

[4Fe-4S] cluster contacts are provided by cysteine 63, cysteine 64, cysteine 128, and cysteine 158.

It belongs to the complex I 20 kDa subunit family. NDH-1 is composed of 14 different subunits. Subunits NuoB, C, D, E, F, and G constitute the peripheral sector of the complex. [4Fe-4S] cluster is required as a cofactor.

It localises to the cell inner membrane. The enzyme catalyses a quinone + NADH + 5 H(+)(in) = a quinol + NAD(+) + 4 H(+)(out). NDH-1 shuttles electrons from NADH, via FMN and iron-sulfur (Fe-S) centers, to quinones in the respiratory chain. The immediate electron acceptor for the enzyme in this species is believed to be ubiquinone. Couples the redox reaction to proton translocation (for every two electrons transferred, four hydrogen ions are translocated across the cytoplasmic membrane), and thus conserves the redox energy in a proton gradient. In Xanthomonas axonopodis pv. citri (strain 306), this protein is NADH-quinone oxidoreductase subunit B.